Here is a 410-residue protein sequence, read N- to C-terminus: Regulator of microtubule dynamics protein 2 (410 aa).

The chain crosses the membrane as a helical span at residues 9–28 (LILGIMAGTAGISLLAFWYH). Ser-51 is subject to Phosphoserine. The stretch at 69–110 (QRRQLQILEKLNELLTNMEELKEEIRFLKETIPKLEECIQDE) forms a coiled coil. A disordered region spans residues 120–151 (ISPQHRARKKKGTTVQRSATSNSSEEAESEGG). Ser-121 carries the post-translational modification Phosphoserine. Basic residues predominate over residues 121–131 (SPQHRARKKKG). The residue at position 139 (Thr-139) is a Phosphothreonine. Tyr-152 is modified (phosphotyrosine). 2 positions are modified to phosphothreonine: Thr-154 and Thr-157.

This sequence belongs to the RMDN family. Interacts with microtubules.

Its subcellular location is the membrane. It is found in the cytoplasm. The protein localises to the cytoskeleton. It localises to the spindle. The protein resides in the spindle pole. In Mus musculus (Mouse), this protein is Regulator of microtubule dynamics protein 2 (Rmdn2).